We begin with the raw amino-acid sequence, 338 residues long: RNA 3'-terminal phosphate cyclase (338 aa).

Residues Gln-103 and 283-287 each bind ATP; that span reads YLADQ. The active-site Tele-AMP-histidine intermediate is the His-308.

This sequence belongs to the RNA 3'-terminal cyclase family. Type 1 subfamily.

The protein localises to the cytoplasm. The enzyme catalyses a 3'-end 3'-phospho-ribonucleotide-RNA + ATP = a 3'-end 2',3'-cyclophospho-ribonucleotide-RNA + AMP + diphosphate. Catalyzes the conversion of 3'-phosphate to a 2',3'-cyclic phosphodiester at the end of RNA. The mechanism of action of the enzyme occurs in 3 steps: (A) adenylation of the enzyme by ATP; (B) transfer of adenylate to an RNA-N3'P to produce RNA-N3'PP5'A; (C) and attack of the adjacent 2'-hydroxyl on the 3'-phosphorus in the diester linkage to produce the cyclic end product. The biological role of this enzyme is unknown but it is likely to function in some aspects of cellular RNA processing. The chain is RNA 3'-terminal phosphate cyclase from Escherichia coli (strain SMS-3-5 / SECEC).